A 298-amino-acid polypeptide reads, in one-letter code: Osmoprotective compounds uptake permease protein GgtD (298 aa).

The next 7 membrane-spanning stretches (helical) occupy residues 26 to 46 (IHIA…GLFI), 97 to 117 (IAVP…YAFA), 126 to 146 (LLFI…LIPV), 158 to 178 (TFLG…IYLL), 207 to 227 (LIVP…FLWV), 231 to 251 (LLVA…TIQL), and 263 to 283 (YLLT…FFGL). In terms of domain architecture, ABC transmembrane type-1 spans 91–283 (FLNSLTIAVP…IVPLMVFFGL (193 aa)).

It belongs to the binding-protein-dependent transport system permease family. In terms of assembly, the complex is composed of two ATP-binding proteins (GgtA), two transmembrane proteins (GgtC and GgtD) and a solute-binding protein (GgtB).

It is found in the cell membrane. Functionally, part of the ABC transporter complex GgtABCD involved in the uptake of the osmoprotective compounds glucosylglycerol (GG), sucrose and trehalose. Responsible for the translocation of the substrate across the membrane. The sequence is that of Osmoprotective compounds uptake permease protein GgtD from Synechocystis sp. (strain ATCC 27184 / PCC 6803 / Kazusa).